A 157-amino-acid chain; its full sequence is Protein Smg homolog (157 aa).

It belongs to the Smg family.

The sequence is that of Protein Smg homolog from Shewanella woodyi (strain ATCC 51908 / MS32).